The following is a 1298-amino-acid chain: Phosphoribosylformylglycinamidine synthase (1298 aa).

Residues 303–327 (FPGAATGSGGEIRDEGATGRGAKPK) are disordered. ATP-binding positions include 305 to 316 (GAATGSGGEIRD), 384 to 386 (TGY), and Ala-676. Residues Asp-677, Glu-716, Asn-720, and Asp-884 each coordinate Mg(2+). Residue Ser-886 participates in ATP binding. Residues 1045–1298 (VAVLREQGVN…MFRNARAWVN (254 aa)) enclose the Glutamine amidotransferase type-1 domain. Cys-1138 (nucleophile) is an active-site residue. Residues His-1263 and Glu-1265 contribute to the active site.

This sequence in the N-terminal section; belongs to the FGAMS family. In terms of assembly, monomer.

The protein resides in the cytoplasm. The enzyme catalyses N(2)-formyl-N(1)-(5-phospho-beta-D-ribosyl)glycinamide + L-glutamine + ATP + H2O = 2-formamido-N(1)-(5-O-phospho-beta-D-ribosyl)acetamidine + L-glutamate + ADP + phosphate + H(+). It functions in the pathway purine metabolism; IMP biosynthesis via de novo pathway; 5-amino-1-(5-phospho-D-ribosyl)imidazole from N(2)-formyl-N(1)-(5-phospho-D-ribosyl)glycinamide: step 1/2. In terms of biological role, phosphoribosylformylglycinamidine synthase involved in the purines biosynthetic pathway. Catalyzes the ATP-dependent conversion of formylglycinamide ribonucleotide (FGAR) and glutamine to yield formylglycinamidine ribonucleotide (FGAM) and glutamate. This Pseudomonas syringae pv. tomato (strain ATCC BAA-871 / DC3000) protein is Phosphoribosylformylglycinamidine synthase.